Consider the following 301-residue polypeptide: Acetylglutamate kinase (301 aa).

Substrate is bound by residues 70–71, R92, and N185; that span reads GG.

This sequence belongs to the acetylglutamate kinase family. ArgB subfamily.

It is found in the cytoplasm. It carries out the reaction N-acetyl-L-glutamate + ATP = N-acetyl-L-glutamyl 5-phosphate + ADP. It participates in amino-acid biosynthesis; L-arginine biosynthesis; N(2)-acetyl-L-ornithine from L-glutamate: step 2/4. Catalyzes the ATP-dependent phosphorylation of N-acetyl-L-glutamate. The sequence is that of Acetylglutamate kinase from Synechococcus elongatus (strain ATCC 33912 / PCC 7942 / FACHB-805) (Anacystis nidulans R2).